The sequence spans 428 residues: Histidine--tRNA ligase (428 aa).

This sequence belongs to the class-II aminoacyl-tRNA synthetase family. Homodimer.

It is found in the cytoplasm. The enzyme catalyses tRNA(His) + L-histidine + ATP = L-histidyl-tRNA(His) + AMP + diphosphate + H(+). This is Histidine--tRNA ligase from Staphylococcus carnosus (strain TM300).